The sequence spans 394 residues: Ornithine aminotransferase 1 (394 aa).

Position 252 is an N6-(pyridoxal phosphate)lysine (Lys252).

Belongs to the class-III pyridoxal-phosphate-dependent aminotransferase family. OAT subfamily. Pyridoxal 5'-phosphate is required as a cofactor.

The protein localises to the cytoplasm. It carries out the reaction a 2-oxocarboxylate + L-ornithine = L-glutamate 5-semialdehyde + an L-alpha-amino acid. The protein operates within amino-acid biosynthesis; L-proline biosynthesis; L-glutamate 5-semialdehyde from L-ornithine: step 1/1. Catalyzes the interconversion of ornithine to glutamate semialdehyde. The polypeptide is Ornithine aminotransferase 1 (Staphylococcus aureus (strain Mu50 / ATCC 700699)).